The following is a 509-amino-acid chain: Putative ATP-dependent RNA helicase QP509L (509 aa).

The 153-residue stretch at 110-262 (KKLLSPYGRF…KIIIHHLGQP (153 aa)) folds into the Helicase ATP-binding domain. 123 to 130 (LNTGLGKT) contacts ATP. Residues 215–218 (DEAH) carry the DEAH box motif.

The protein belongs to the DEAD box helicase family. DEAH subfamily.

The enzyme catalyses ATP + H2O = ADP + phosphate + H(+). The polypeptide is Putative ATP-dependent RNA helicase QP509L (African swine fever virus (strain Badajoz 1971 Vero-adapted) (Ba71V)).